The sequence spans 361 residues: Chorismate synthase (361 aa).

NADP(+) contacts are provided by Arg48 and Arg54. FMN contacts are provided by residues 125 to 127 (RSS), 238 to 239 (NA), Gly278, 293 to 297 (KPTSS), and Arg319.

Belongs to the chorismate synthase family. In terms of assembly, homotetramer. It depends on FMNH2 as a cofactor.

The enzyme catalyses 5-O-(1-carboxyvinyl)-3-phosphoshikimate = chorismate + phosphate. It functions in the pathway metabolic intermediate biosynthesis; chorismate biosynthesis; chorismate from D-erythrose 4-phosphate and phosphoenolpyruvate: step 7/7. In terms of biological role, catalyzes the anti-1,4-elimination of the C-3 phosphate and the C-6 proR hydrogen from 5-enolpyruvylshikimate-3-phosphate (EPSP) to yield chorismate, which is the branch point compound that serves as the starting substrate for the three terminal pathways of aromatic amino acid biosynthesis. This reaction introduces a second double bond into the aromatic ring system. The polypeptide is Chorismate synthase (Sodalis glossinidius (strain morsitans)).